A 36-amino-acid polypeptide reads, in one-letter code: MAASFLPSILVPLVGLVFPAIAIASLFIYIEQDEII.

A helical membrane pass occupies residues 5–27 (FLPSILVPLVGLVFPAIAIASLF).

The protein belongs to the PsaI family.

The protein resides in the plastid. It is found in the chloroplast thylakoid membrane. May help in the organization of the PsaL subunit. In Chaetosphaeridium globosum (Charophycean green alga), this protein is Photosystem I reaction center subunit VIII.